Here is a 122-residue protein sequence, read N- to C-terminus: Small ribosomal subunit protein uS13 (122 aa).

A disordered region spans residues 97–122 (PVRGQRTHTNARTRKGPAKAIAGKKK).

It belongs to the universal ribosomal protein uS13 family. As to quaternary structure, part of the 30S ribosomal subunit. Forms a loose heterodimer with protein S19. Forms two bridges to the 50S subunit in the 70S ribosome.

Located at the top of the head of the 30S subunit, it contacts several helices of the 16S rRNA. In the 70S ribosome it contacts the 23S rRNA (bridge B1a) and protein L5 of the 50S subunit (bridge B1b), connecting the 2 subunits; these bridges are implicated in subunit movement. Contacts the tRNAs in the A and P-sites. The chain is Small ribosomal subunit protein uS13 from Bartonella quintana (strain Toulouse) (Rochalimaea quintana).